Consider the following 175-residue polypeptide: Large ribosomal subunit protein uL10 (175 aa).

The protein belongs to the universal ribosomal protein uL10 family. As to quaternary structure, part of the ribosomal stalk of the 50S ribosomal subunit. The N-terminus interacts with L11 and the large rRNA to form the base of the stalk. The C-terminus forms an elongated spine to which L12 dimers bind in a sequential fashion forming a multimeric L10(L12)X complex.

Its function is as follows. Forms part of the ribosomal stalk, playing a central role in the interaction of the ribosome with GTP-bound translation factors. The polypeptide is Large ribosomal subunit protein uL10 (Prochlorococcus marinus (strain MIT 9211)).